A 285-amino-acid chain; its full sequence is Inositol oxygenase (285 aa).

Residue Arg-29 participates in substrate binding. Residue Ser-33 is modified to Phosphoserine. Residue 85–87 participates in substrate binding; that stretch reads DES. Residues His-98, His-123, and Asp-124 each coordinate Fe cation. Substrate contacts are provided by residues Lys-127 and 141–142; that span reads GD. Fe cation contacts are provided by His-194, His-220, and Asp-253. 220–221 is a substrate binding site; the sequence is HS.

It belongs to the myo-inositol oxygenase family. The cofactor is Fe cation. As to expression, kidney specific.

The protein localises to the cytoplasm. The enzyme catalyses myo-inositol + O2 = D-glucuronate + H2O + H(+). The protein operates within polyol metabolism; myo-inositol degradation into D-glucuronate; D-glucuronate from myo-inositol: step 1/1. In Homo sapiens (Human), this protein is Inositol oxygenase (MIOX).